The primary structure comprises 865 residues: Taste receptor type 1 member 3 (865 aa).

The N-terminal stretch at 1 to 24 (MPGLALLGLTALLGLTALLDHGEG) is a signal peptide. Residues 25–573 (ATSCLSQQLR…FLAWGEPAVL (549 aa)) lie on the Extracellular side of the membrane. Asparagine 134 and asparagine 267 each carry an N-linked (GlcNAc...) asparagine glycan. Residues 574-594 (LLLALLALALGLALAALGLFL) traverse the membrane as a helical segment. Over 595 to 606 (WHSDSPLVQASG) the chain is Cytoplasmic. Residues 607–627 (GPRACFGLACLGLVCLSVLLF) traverse the membrane as a helical segment. Residues 628–642 (PGQPGPASCLAQQPL) lie on the Extracellular side of the membrane. The chain crosses the membrane as a helical span at residues 643-663 (FHLPLTGCLSTFFLQAAEIFV). Residues 664–685 (GSELPPSWAEKMRGRLRGPWAW) are Cytoplasmic-facing. A helical transmembrane segment spans residues 686-706 (LVVLLAMLAEAALCAWYLVAF). The Extracellular segment spans residues 707 to 732 (PPEVVTDWRVLPTEALVHCHVHSWIS). A helical transmembrane segment spans residues 733–753 (FGLVHATNAMLAFLCFLGTFL). The Cytoplasmic segment spans residues 754 to 765 (VQSRPGRYNGAR). The helical transmembrane segment at 766–786 (GLTFAMLAYFITWISFVPLFA) threads the bilayer. At 787–794 (NVHVAYQP) the chain is on the extracellular side. The helical transmembrane segment at 795–815 (AVQMGTILLCALGILATFHLP) threads the bilayer. Over 816 to 865 (KCYLLLQRPELNTPEFFLEDNARAQGSSWGQGRGESGQKQVTPDPVTSPQ) the chain is Cytoplasmic. The tract at residues 840–865 (QGSSWGQGRGESGQKQVTPDPVTSPQ) is disordered. The span at 852 to 865 (GQKQVTPDPVTSPQ) shows a compositional bias: polar residues.

It belongs to the G-protein coupled receptor 3 family. TAS1R subfamily. As to quaternary structure, forms homodimers or a heterodimer with TAS1R1. As to expression, expressed in taste buds.

Its subcellular location is the cell membrane. Putative taste receptor. TAS1R1/TAS1R3 responds to the umami taste stimulus (the taste of monosodium glutamate). The sequence is that of Taste receptor type 1 member 3 (TAS1R3) from Felis catus (Cat).